Consider the following 793-residue polypeptide: Phenylalanine--tRNA ligase beta subunit (793 aa).

The region spanning 39-148 (AGQFTHVIVA…DEAPIGMDLR (110 aa)) is the tRNA-binding domain. Residues 401–477 (PGTVSFLFDT…RLYGYDKLQA (77 aa)) form the B5 domain. Positions 455, 461, 464, and 465 each coordinate Mg(2+). Residues 698–792 (SKYPQIRRDL…LENEFSILLR (95 aa)) form the FDX-ACB domain.

Belongs to the phenylalanyl-tRNA synthetase beta subunit family. Type 1 subfamily. As to quaternary structure, tetramer of two alpha and two beta subunits. Mg(2+) serves as cofactor.

It is found in the cytoplasm. The enzyme catalyses tRNA(Phe) + L-phenylalanine + ATP = L-phenylalanyl-tRNA(Phe) + AMP + diphosphate + H(+). The protein is Phenylalanine--tRNA ligase beta subunit of Legionella pneumophila (strain Paris).